The chain runs to 438 residues: Histidine--tRNA ligase (438 aa).

The protein belongs to the class-II aminoacyl-tRNA synthetase family. In terms of assembly, homodimer.

Its subcellular location is the cytoplasm. The catalysed reaction is tRNA(His) + L-histidine + ATP = L-histidyl-tRNA(His) + AMP + diphosphate + H(+). The polypeptide is Histidine--tRNA ligase (Blochmanniella pennsylvanica (strain BPEN)).